Reading from the N-terminus, the 327-residue chain is Regulatory protein MsrR (327 aa).

Residues 1–18 are compositionally biased toward basic and acidic residues; it reads MDKETNDNEYRRQSEHRT. The disordered stretch occupies residues 1 to 24; the sequence is MDKETNDNEYRRQSEHRTSAPKRK. The Cytoplasmic portion of the chain corresponds to 1 to 31; sequence MDKETNDNEYRRQSEHRTSAPKRKKKKKIRK. The helical; Signal-anchor for type II membrane protein transmembrane segment at 32–52 threads the bilayer; it reads LPIILLIVVILLIALVVYIVH. Over 53–327 the chain is Extracellular; that stretch reads SYNSGVEYAK…QAIKDFLDED (275 aa).

It belongs to the LytR/CpsA/Psr (LCP) family.

The protein resides in the cell membrane. In terms of biological role, involved in SarA attenuation. Affects resistance to oxacillin and teicoplanin, as well as the synthesis of virulence factors. The chain is Regulatory protein MsrR (msrR) from Staphylococcus aureus (strain NCTC 8325 / PS 47).